The sequence spans 413 residues: Tyrosine--tRNA ligase (413 aa).

Tyr34 provides a ligand contact to L-tyrosine. A 'HIGH' region motif is present at residues 39–48 (CTAQSLHVGN). The L-tyrosine site is built by Tyr171 and Gln175. The 'KMSKS' region signature appears at 231 to 235 (KMGKT). Lys234 contributes to the ATP binding site. One can recognise an S4 RNA-binding domain in the interval 346 to 411 (IPITELLVTI…GKKCHILVKI (66 aa)).

This sequence belongs to the class-I aminoacyl-tRNA synthetase family. TyrS type 1 subfamily. As to quaternary structure, homodimer.

The protein resides in the cytoplasm. The catalysed reaction is tRNA(Tyr) + L-tyrosine + ATP = L-tyrosyl-tRNA(Tyr) + AMP + diphosphate + H(+). Its function is as follows. Catalyzes the attachment of tyrosine to tRNA(Tyr) in a two-step reaction: tyrosine is first activated by ATP to form Tyr-AMP and then transferred to the acceptor end of tRNA(Tyr). In Orientia tsutsugamushi (strain Ikeda) (Rickettsia tsutsugamushi), this protein is Tyrosine--tRNA ligase.